The chain runs to 159 residues: Urease subunit beta 2 (159 aa).

The disordered stretch occupies residues 1-23 (MAKEPTEAAHPQPEQTKTNHKAH).

The protein belongs to the urease beta subunit family. As to quaternary structure, heterotrimer of UreA (gamma), UreB (beta) and UreC (alpha) subunits. Three heterotrimers associate to form the active enzyme.

The protein resides in the cytoplasm. It carries out the reaction urea + 2 H2O + H(+) = hydrogencarbonate + 2 NH4(+). Its pathway is nitrogen metabolism; urea degradation; CO(2) and NH(3) from urea (urease route): step 1/1. This Brucella abortus biovar 1 (strain 9-941) protein is Urease subunit beta 2.